The following is a 326-amino-acid chain: Aldo-keto reductase family 1 member D1 (326 aa).

Residues 22-26 (GLGTY) and Asp-52 each bind NADP(+). A substrate-binding site is contributed by Tyr-26. Positions 57, 88, 119, and 131 each coordinate substrate. Tyr-57 serves as the catalytic Proton donor. Residues 168–169 (SN), Gln-192, and 219–224 (YSPLGT) contribute to the NADP(+) site. Residue Trp-230 coordinates substrate. 273-283 (KSTTPERIKEN) provides a ligand contact to NADP(+).

The protein belongs to the aldo/keto reductase family. In terms of processing, the N-terminus is blocked.

The protein localises to the cytoplasm. It carries out the reaction 5beta-cholestan-3-one + NADP(+) = cholest-4-en-3-one + NADPH + H(+). The enzyme catalyses 4,5beta-dihydrocortisone + NADP(+) = cortisone + NADPH + H(+). It catalyses the reaction cortisol + NADPH + H(+) = 5beta-dihydrocortisol + NADP(+). The catalysed reaction is corticosterone + NADPH + H(+) = 5beta-dihydrocorticosterone + NADP(+). It carries out the reaction 7alpha,12alpha-dihydroxycholest-4-en-3-one + NADPH + H(+) = 7alpha,12alpha-dihydroxy-5beta-cholestan-3-one + NADP(+). The enzyme catalyses 7alpha-hydroxycholest-4-en-3-one + NADPH + H(+) = 7alpha-hydroxy-5beta-cholestan-3-one + NADP(+). It catalyses the reaction epitestosterone + NADPH + H(+) = 5beta-dihydroepitestosterone + NADP(+). The catalysed reaction is androst-4-ene-3,17-dione + NADPH + H(+) = 5beta-androstane-3,17-dione + NADP(+). It carries out the reaction progesterone + NADPH + H(+) = 5beta-pregnan-3,20-dione + NADP(+). The enzyme catalyses 21-hydroxyprogesterone + NADPH + H(+) = 5beta-dihydrodeoxycorticosterone + NADP(+). It catalyses the reaction aldosterone + NADPH + H(+) = 5beta-dihydroaldosterone + NADP(+). The catalysed reaction is 17beta-hydroxyandrosta-1,4-dien-3-one + NADPH + H(+) = 17beta-hydroxy-5beta-androst-1-en-3-one + NADP(+). It carries out the reaction 17beta-hydroxyestr-4-en-3-one + NADPH + H(+) = 17beta-hydroxy-5beta-estran-3-one + NADP(+). The enzyme catalyses 5beta-dihydrotestosterone + NADP(+) = testosterone + NADPH + H(+). It catalyses the reaction androst-4-ene-3,11,17-trione + NADPH + H(+) = 17beta-hydroxyandrost-4-ene-3,11-dione + NADP(+). With respect to regulation, subject to inhibition by high substrate concentrations. Inhibited by testosterone concentrations above 10 uM. Inhibited by the primary and secondary bile acids chenodeoxycholic acid and ursodeoxycholic acid. In terms of biological role, catalyzes the stereospecific NADPH-dependent reduction of the C4-C5 double bond of bile acid intermediates and steroid hormones carrying a delta(4)-3-one structure to yield an A/B cis-ring junction. This cis-configuration is crucial for bile acid biosynthesis and plays important roles in steroid metabolism. Capable of reducing a broad range of delta-(4)-3-ketosteroids from C18 (such as, 17beta-hydroxyestr-4-en-3-one) to C27 (such as, 7alpha-hydroxycholest-4-en-3-one). This chain is Aldo-keto reductase family 1 member D1 (Akr1d1), found in Rattus norvegicus (Rat).